A 426-amino-acid polypeptide reads, in one-letter code: 4-hydroxy-3-methylbut-2-en-1-yl diphosphate synthase (flavodoxin) (426 aa).

Residues 1–20 (MLDRDLTLSDDAYESSPVSR) form a disordered region. Cysteine 320, cysteine 323, cysteine 366, and glutamate 373 together coordinate [4Fe-4S] cluster.

This sequence belongs to the IspG family. The cofactor is [4Fe-4S] cluster.

The enzyme catalyses (2E)-4-hydroxy-3-methylbut-2-enyl diphosphate + oxidized [flavodoxin] + H2O + 2 H(+) = 2-C-methyl-D-erythritol 2,4-cyclic diphosphate + reduced [flavodoxin]. It functions in the pathway isoprenoid biosynthesis; isopentenyl diphosphate biosynthesis via DXP pathway; isopentenyl diphosphate from 1-deoxy-D-xylulose 5-phosphate: step 5/6. Converts 2C-methyl-D-erythritol 2,4-cyclodiphosphate (ME-2,4cPP) into 1-hydroxy-2-methyl-2-(E)-butenyl 4-diphosphate. In Wolbachia pipientis subsp. Culex pipiens (strain wPip), this protein is 4-hydroxy-3-methylbut-2-en-1-yl diphosphate synthase (flavodoxin).